Consider the following 430-residue polypeptide: Potassium channel subfamily K member 12 (430 aa).

Topologically, residues 1–38 (MSSRSPRPPPRRSRRRLPRPSCCCCCCRRSHLNEDTGR) are cytoplasmic. Residues 11–16 (RRSRRR) are ER retention/retrieval signal. A helical transmembrane segment spans residues 39-59 (FVLLAALIGLYLVAGATVFSA). N-linked (GlcNAc...) asparagine glycosylation occurs at asparagine 78. Residues 114-134 (WDFPGAFYFVGTVVSTIGFGM) constitute an intramembrane region (pore-forming). 3 residues coordinate K(+): threonine 129, isoleucine 130, and glycine 131. Residues 129 to 134 (TIGFGM) are selectivity filter 1. A helical transmembrane segment spans residues 145 to 165 (FLIAYGLFGCAGTILFFNLFL). At 166–212 (ERIISLLAFIMRACRERQLRRSGLLPATFRRGSALSEADSLAGWKPS) the chain is on the cytoplasmic side. The chain crosses the membrane as a helical span at residues 213–233 (VYHVLLILGLFAVLLSCCASA). An intramembrane region (pore-forming) is located at residues 243–263 (YVDSLYFCFVTFSTIGFGDLV). K(+)-binding residues include threonine 256, isoleucine 257, glycine 258, and phenylalanine 259. The segment at 256–261 (TIGFGD) is selectivity filter 2. Residues 282 to 302 (LFILLGVCCIYSLFNVISILI) form a helical membrane-spanning segment. Over 303 to 430 (KQVLNWMLRK…NRLAETSASR (128 aa)) the chain is Cytoplasmic.

It belongs to the two pore domain potassium channel (TC 1.A.1.8) family. As to quaternary structure, homodimer. Heterodimer with KCNK13.

The protein localises to the cell membrane. The protein resides in the endoplasmic reticulum membrane. The enzyme catalyses K(+)(in) = K(+)(out). K(+) channel subunit that may homo- and heterodimerize to form functional channels with distinct regulatory and gating properties. Can heterodimerize with KCNK13 subunit to conduct K(+) outward rectifying currents at the plasma membrane. The homodimers are mainly retained in the endoplasmic reticulum compartment and may be targeted to the cell surface upon phosphorylation or other activation signals yet to be elucidated. This is Potassium channel subfamily K member 12 from Homo sapiens (Human).